The chain runs to 348 residues: Fe(3+) ions import ATP-binding protein FbpC (348 aa).

Residues 7-237 enclose the ABC transporter domain; that stretch reads VELRNVTKRF…PASRFMASFM (231 aa). Position 39 to 46 (39 to 46) interacts with ATP; it reads GPSGCGKT.

This sequence belongs to the ABC transporter superfamily. Fe(3+) ion importer (TC 3.A.1.10) family. As to quaternary structure, the complex is composed of two ATP-binding proteins (FbpC), two transmembrane proteins (FbpB) and a solute-binding protein (FbpA).

Its subcellular location is the cell inner membrane. It catalyses the reaction Fe(3+)(out) + ATP + H2O = Fe(3+)(in) + ADP + phosphate + H(+). Its function is as follows. Part of the ABC transporter complex FbpABC involved in Fe(3+) ions import. Responsible for energy coupling to the transport system. The polypeptide is Fe(3+) ions import ATP-binding protein FbpC (Escherichia coli O157:H7).